We begin with the raw amino-acid sequence, 137 residues long: Large ribosomal subunit protein uL22 (137 aa).

It belongs to the universal ribosomal protein uL22 family. Part of the 50S ribosomal subunit.

This protein binds specifically to 23S rRNA; its binding is stimulated by other ribosomal proteins, e.g. L4, L17, and L20. It is important during the early stages of 50S assembly. It makes multiple contacts with different domains of the 23S rRNA in the assembled 50S subunit and ribosome. In terms of biological role, the globular domain of the protein is located near the polypeptide exit tunnel on the outside of the subunit, while an extended beta-hairpin is found that lines the wall of the exit tunnel in the center of the 70S ribosome. The chain is Large ribosomal subunit protein uL22 from Flavobacterium psychrophilum (strain ATCC 49511 / DSM 21280 / CIP 103535 / JIP02/86).